Reading from the N-terminus, the 311-residue chain is CAAX prenyl protease 2 (311 aa).

Transmembrane regions (helical) follow at residues 14-34, 51-71, and 94-114; these read VATC…PTVI, FICA…ILPI, and VVYP…LKLF. Residue Glu164 is the Proton donor/acceptor of the active site. A helical transmembrane segment spans residues 173–193; the sequence is IPLLLCAGFRINTAIFLCPVL. The active-site Proton donor/acceptor is His198. 3 consecutive transmembrane segments (helical) span residues 219–239, 244–264, and 268–288; these read IVGL…FLFI, LAAP…VLYA, and GLVS…LFPL.

This sequence belongs to the peptidase U48 family. In terms of tissue distribution, expressed in seeds, stems, leaves, flowers and siliques.

Its subcellular location is the endoplasmic reticulum membrane. It catalyses the reaction Hydrolyzes the peptide bond -P2-(S-farnesyl or geranylgeranyl)C-P1'-P2'-P3'-COOH where P1' and P2' are amino acids with aliphatic sidechains and P3' is any C-terminal residue.. Its activity is regulated as follows. Inhibited in vitro by L-1-tosylamido-2-phenylethyl chloromethyl ketone (TPCK) and N-ethylmaleimide, but not by EDTA. Functionally, protease involved in the processing of a variety of prenylated proteins containing the C-terminal CAAX motif, where C is a cysteine modified with an isoprenoid lipid, A is an aliphatic amino acid and X is any C-terminal amino acid. Proteolytically removes the C-terminal three residues of farnesylated and geranylated proteins, leaving the prenylated cysteine as the new C-terminus. The substrate specificity is only partially overlapping with that of FACE1. CAAX processing is likely required for subcellular targeting of prenylated proteins to the plasma membrane. The polypeptide is CAAX prenyl protease 2 (FACE2) (Arabidopsis thaliana (Mouse-ear cress)).